Reading from the N-terminus, the 1153-residue chain is Error-prone DNA polymerase (1153 aa).

Disordered regions lie at residues 1-39 (MFYS…QAQP) and 64-89 (VGEG…GASQ).

The protein belongs to the DNA polymerase type-C family. DnaE2 subfamily.

Its subcellular location is the cytoplasm. It catalyses the reaction DNA(n) + a 2'-deoxyribonucleoside 5'-triphosphate = DNA(n+1) + diphosphate. In terms of biological role, DNA polymerase involved in damage-induced mutagenesis and translesion synthesis (TLS). It is not the major replicative DNA polymerase. The chain is Error-prone DNA polymerase from Corynebacterium jeikeium (strain K411).